A 269-amino-acid chain; its full sequence is Diadenylate cyclase (269 aa).

One can recognise a DAC domain in the interval 109–266 (RSGIYDLFAN…GGKMILEIDP (158 aa)).

The protein belongs to the adenylate cyclase family. DacZ subfamily. Requires Mn(2+) as cofactor.

It carries out the reaction 2 ATP = 3',3'-c-di-AMP + 2 diphosphate. Diadenylate cyclase that catalyzes the condensation of 2 ATP molecules into cyclic di-AMP (c-di-AMP). c-di-AMP is a second messenger for intracellular signal transduction involved in the control of important regulatory processes such as osmoregulation. Is essential for H.volcanii. Overexpression of DacZ leads to cell death, suggesting the need for tight regulation of c-di-AMP levels. Cannot use GTP as substrate. This chain is Diadenylate cyclase, found in Haloferax volcanii (strain ATCC 29605 / DSM 3757 / JCM 8879 / NBRC 14742 / NCIMB 2012 / VKM B-1768 / DS2) (Halobacterium volcanii).